We begin with the raw amino-acid sequence, 533 residues long: Glucans biosynthesis protein D (533 aa).

Residues 1–28 (MQRRHFLKNAAAALAALGLPALPPWALA) constitute a signal peptide (tat-type signal).

The protein belongs to the OpgD/OpgG family. In terms of processing, predicted to be exported by the Tat system. The position of the signal peptide cleavage has not been experimentally proven.

It localises to the periplasm. The protein operates within glycan metabolism; osmoregulated periplasmic glucan (OPG) biosynthesis. Its function is as follows. Probably involved in the control of the structural glucose backbone of osmoregulated periplasmic glucans (OPGs). The polypeptide is Glucans biosynthesis protein D (Xanthomonas campestris pv. campestris (strain 8004)).